The chain runs to 525 residues: MAAGGSGGRASCPPGVGVGPGTGGSPGPSANAAATPAPGNAAAAAAAAAAAAAAPGPTPPAPPGPGTDAQAAGAERAEEAAGPGAAALQREAAYNWQASKPTVQERFAFLFNNEVLCDVHFLVGKGLSSQRIPAHRFVLAVGSAVFDAMFNGGMATTSTEIELPDVEPAAFLALLKFLYSDEVQIGPETVMTTLYTAKKYAVPALEAHCVEFLKKNLRADNAFMLLTQARLFDEPQLASLCLENIDKNTADAITAEGFTDIDLDTLVAVLERDTLGIREVRLFNAVVRWSEAECQRQQLQVTPENRRKVLGKALGLIRFPLMTIEEFAAGPAQSGILVDREVVSLFLHFTVNPKPRVEFIDRPRCCLRGKECSINRFQQVESRWGYSGTSDRIRFSVNKRIFVVGFGLYGSIHGPTDYQVNIQIIHTDSNTVLGQNDTGFSCDGSASTFRVMFKEPVEVLPNVNYTACATLKGPDSHYGTKGLRKVTHESPTTGAKTCFTFCYAAGNNNGTSVEDGQIPEVIFYT.

The interval Met-1–Ala-86 is disordered. The segment covering Val-16–Pro-26 has biased composition (gly residues). A compositionally biased stretch (low complexity) spans Gly-27–Pro-55. The segment covering Gly-56–Pro-65 has biased composition (pro residues). A compositionally biased stretch (low complexity) spans Gly-66–Ala-86. The 71-residue stretch at Cys-117 to Pro-187 folds into the BTB domain.

In terms of assembly, interacts with topoisomerase 1 and with TRIM5 isoform Delta.

The protein localises to the cytoplasm. This chain is BTB/POZ domain-containing protein 2 (BTBD2), found in Homo sapiens (Human).